A 328-amino-acid polypeptide reads, in one-letter code: DNA-directed RNA polymerase subunit alpha (328 aa).

The alpha N-terminal domain (alpha-NTD) stretch occupies residues 1 to 232 (MHNSLAELIK…QHLAILVDLK (232 aa)). Residues 246-328 (FDPLLLHPVD…PPEGLKKLNQ (83 aa)) form an alpha C-terminal domain (alpha-CTD) region.

This sequence belongs to the RNA polymerase alpha chain family. Homodimer. The RNAP catalytic core consists of 2 alpha, 1 beta, 1 beta' and 1 omega subunit. When a sigma factor is associated with the core the holoenzyme is formed, which can initiate transcription.

It catalyses the reaction RNA(n) + a ribonucleoside 5'-triphosphate = RNA(n+1) + diphosphate. In terms of biological role, DNA-dependent RNA polymerase catalyzes the transcription of DNA into RNA using the four ribonucleoside triphosphates as substrates. This Methylococcus capsulatus (strain ATCC 33009 / NCIMB 11132 / Bath) protein is DNA-directed RNA polymerase subunit alpha.